A 367-amino-acid polypeptide reads, in one-letter code: tRNA/tmRNA (uracil-C(5))-methyltransferase (367 aa).

Glutamine 189, tyrosine 217, asparagine 222, glutamate 238, and aspartate 298 together coordinate S-adenosyl-L-methionine. The Nucleophile role is filled by cysteine 323. Catalysis depends on glutamate 357, which acts as the Proton acceptor.

This sequence belongs to the class I-like SAM-binding methyltransferase superfamily. RNA M5U methyltransferase family. TrmA subfamily.

The enzyme catalyses uridine(54) in tRNA + S-adenosyl-L-methionine = 5-methyluridine(54) in tRNA + S-adenosyl-L-homocysteine + H(+). It catalyses the reaction uridine(341) in tmRNA + S-adenosyl-L-methionine = 5-methyluridine(341) in tmRNA + S-adenosyl-L-homocysteine + H(+). Its function is as follows. Dual-specificity methyltransferase that catalyzes the formation of 5-methyluridine at position 54 (m5U54) in all tRNAs, and that of position 341 (m5U341) in tmRNA (transfer-mRNA). This is tRNA/tmRNA (uracil-C(5))-methyltransferase from Pseudoalteromonas translucida (strain TAC 125).